A 700-amino-acid polypeptide reads, in one-letter code: Probable transcription factor FUP6 (700 aa).

Disordered stretches follow at residues 343–364 (SEAG…NRHS) and 577–624 (FDSV…PLNQ). Residues 577–595 (FDSVHSGRDSVSSAMNYQS) show a composition bias toward polar residues. The span at 596–607 (DSRKRARLDTES) shows a compositional bias: basic and acidic residues. The segment covering 608-623 (NPRSSQRNDGSGQPLN) has biased composition (polar residues).

Its subcellular location is the nucleus. Its function is as follows. Probable transcrition factor; part of the gene cluster that mediates the biosynthesis of the mycotoxin fusaproliferin (FUP) that belongs to the class of bicyclic sesterterpenoids. This is Probable transcription factor FUP6 from Fusarium proliferatum (strain ET1) (Orchid endophyte fungus).